Reading from the N-terminus, the 755-residue chain is 3-isopropylmalate dehydratase (755 aa).

[4Fe-4S] cluster-binding residues include C353, C413, and C416. Disordered regions lie at residues 427–446 (GERC…GAGG), 471–493 (LTPA…ELEP), and 510–529 (DAPA…AAGM). A compositionally biased stretch (low complexity) spans 510–528 (DAPATGASPPSPAPSDAAG).

The protein belongs to the aconitase/IPM isomerase family. In terms of assembly, monomer. [4Fe-4S] cluster is required as a cofactor.

It catalyses the reaction (2R,3S)-3-isopropylmalate = (2S)-2-isopropylmalate. Its pathway is amino-acid biosynthesis; L-leucine biosynthesis; L-leucine from 3-methyl-2-oxobutanoate: step 2/4. In terms of biological role, catalyzes the isomerization between 2-isopropylmalate and 3-isopropylmalate, via the formation of 2-isopropylmaleate. This is 3-isopropylmalate dehydratase (LEUA) from Rhizomucor pusillus.